The primary structure comprises 346 residues: D-alanine--D-alanine ligase (346 aa).

In terms of domain architecture, ATP-grasp spans 125–325; that stretch reads KRIWRSEGLP…YPALCLEVLR (201 aa). An ATP-binding site is contributed by 151–206; the sequence is FAALGSPMIVKPDREGSTIGLTKVTQIEQCGAAYALAARHDAMVLCEQFVKGDEVT. Positions 278, 292, and 294 each coordinate Mg(2+).

This sequence belongs to the D-alanine--D-alanine ligase family. Mg(2+) is required as a cofactor. It depends on Mn(2+) as a cofactor.

The protein localises to the cytoplasm. The catalysed reaction is 2 D-alanine + ATP = D-alanyl-D-alanine + ADP + phosphate + H(+). It participates in cell wall biogenesis; peptidoglycan biosynthesis. Its function is as follows. Cell wall formation. The protein is D-alanine--D-alanine ligase of Albidiferax ferrireducens (strain ATCC BAA-621 / DSM 15236 / T118) (Rhodoferax ferrireducens).